Consider the following 295-residue polypeptide: tRNA(Ile)-lysidine synthase (295 aa).

10–15 is a binding site for ATP; sequence SGGPDS.

The protein belongs to the tRNA(Ile)-lysidine synthase family.

It is found in the cytoplasm. The enzyme catalyses cytidine(34) in tRNA(Ile2) + L-lysine + ATP = lysidine(34) in tRNA(Ile2) + AMP + diphosphate + H(+). In terms of biological role, ligates lysine onto the cytidine present at position 34 of the AUA codon-specific tRNA(Ile) that contains the anticodon CAU, in an ATP-dependent manner. Cytidine is converted to lysidine, thus changing the amino acid specificity of the tRNA from methionine to isoleucine. The polypeptide is tRNA(Ile)-lysidine synthase (Malacoplasma penetrans (strain HF-2) (Mycoplasma penetrans)).